The primary structure comprises 318 residues: MSAHQQGTELDLSWISKIQVNKPAVLRRAEQIQARRPVKKEWQAAWLLKAVTCIDLTTLSGDDTASNIQRLCYKAKYPIREDLLKALNMHDKGITTAAVCVYPARVCDAVRALKAAGCDIPVASVATGFPAAQTHLKTRLEEIRLAVEDGATEIDVVINRTLVLTGQWKALYDEIRQFRKACGEAHLKTILATGELGSLTNVYKASMIAMMAGSDFIKTSTGKETVNATFPVAIVMLRAIRDFFWKTGNKVGFKPAGGIRSAKDSLVWLSLIKEELGDEWMKPELFRIGASTLLADIERQIYHHVTGRYAAYHDLPMS.

Catalysis depends on Asp-155, which acts as the Proton donor/acceptor. Catalysis depends on Lys-218, which acts as the Schiff-base intermediate with acetaldehyde. The active-site Proton donor/acceptor is the Lys-254.

Belongs to the DeoC/FbaB aldolase family. DeoC type 2 subfamily. Interacts with YBX1.

It localises to the cytoplasm. It is found in the cytoplasmic granule. The protein resides in the nucleus. It carries out the reaction 2-deoxy-D-ribose 5-phosphate = D-glyceraldehyde 3-phosphate + acetaldehyde. The protein operates within carbohydrate degradation; 2-deoxy-D-ribose 1-phosphate degradation; D-glyceraldehyde 3-phosphate and acetaldehyde from 2-deoxy-alpha-D-ribose 1-phosphate: step 2/2. Its function is as follows. Catalyzes a reversible aldol reaction between acetaldehyde and D-glyceraldehyde 3-phosphate to generate 2-deoxy-D-ribose 5-phosphate. Participates in stress granule (SG) assembly. May allow ATP production from extracellular deoxyinosine in conditions of energy deprivation. The chain is Deoxyribose-phosphate aldolase (DERA) from Bos taurus (Bovine).